Reading from the N-terminus, the 124-residue chain is Ribonuclease pancreatic (124 aa).

Basic and acidic residues predominate over residues 1–13 (KESAAAKFERQHI). A disordered region spans residues 1 to 23 (KESAAAKFERQHIDSSTSSVSSS). Substrate-binding residues include K7 and R10. H12 serves as the catalytic Proton acceptor. 4 disulfides stabilise this stretch: C26-C84, C40-C95, C58-C110, and C65-C72. N34 is a glycosylation site (N-linked (GlcNAc...) asparagine). Residues 41-45 (KPVNT), K66, and R85 contribute to the substrate site. Catalysis depends on H119, which acts as the Proton donor.

This sequence belongs to the pancreatic ribonuclease family. Monomer. Interacts with and forms tight 1:1 complexes with RNH1. Dimerization of two such complexes may occur. Interaction with RNH1 inhibits this protein. Pancreas.

It is found in the secreted. The enzyme catalyses an [RNA] containing cytidine + H2O = an [RNA]-3'-cytidine-3'-phosphate + a 5'-hydroxy-ribonucleotide-3'-[RNA].. It carries out the reaction an [RNA] containing uridine + H2O = an [RNA]-3'-uridine-3'-phosphate + a 5'-hydroxy-ribonucleotide-3'-[RNA].. Functionally, endonuclease that catalyzes the cleavage of RNA on the 3' side of pyrimidine nucleotides. Acts on single-stranded and double-stranded RNA. This Giraffa camelopardalis (Giraffe) protein is Ribonuclease pancreatic (RNASE1).